A 449-amino-acid polypeptide reads, in one-letter code: UDP-N-acetylmuramoylalanine--D-glutamate ligase (449 aa).

Residue 118–124 (GTNGKTT) participates in ATP binding.

Belongs to the MurCDEF family.

Its subcellular location is the cytoplasm. It catalyses the reaction UDP-N-acetyl-alpha-D-muramoyl-L-alanine + D-glutamate + ATP = UDP-N-acetyl-alpha-D-muramoyl-L-alanyl-D-glutamate + ADP + phosphate + H(+). It functions in the pathway cell wall biogenesis; peptidoglycan biosynthesis. Its function is as follows. Cell wall formation. Catalyzes the addition of glutamate to the nucleotide precursor UDP-N-acetylmuramoyl-L-alanine (UMA). The polypeptide is UDP-N-acetylmuramoylalanine--D-glutamate ligase (Staphylococcus aureus (strain MW2)).